Reading from the N-terminus, the 308-residue chain is Glycine--tRNA ligase alpha subunit (308 aa).

The protein belongs to the class-II aminoacyl-tRNA synthetase family. Tetramer of two alpha and two beta subunits.

It localises to the cytoplasm. It carries out the reaction tRNA(Gly) + glycine + ATP = glycyl-tRNA(Gly) + AMP + diphosphate. In Brevibacillus brevis (strain 47 / JCM 6285 / NBRC 100599), this protein is Glycine--tRNA ligase alpha subunit.